The sequence spans 68 residues: Protein DsrB (68 aa).

Belongs to the DsrB family.

The polypeptide is Protein DsrB (Sodalis glossinidius (strain morsitans)).